Here is a 138-residue protein sequence, read N- to C-terminus: Large ribosomal subunit protein uL16 (138 aa).

Basic residues predominate over residues 1–17 (MLIPRKVKHRKQHHPRQ). The disordered stretch occupies residues 1–22 (MLIPRKVKHRKQHHPRQRGIAS).

It belongs to the universal ribosomal protein uL16 family. In terms of assembly, part of the 50S ribosomal subunit.

In terms of biological role, binds 23S rRNA and is also seen to make contacts with the A and possibly P site tRNAs. The polypeptide is Large ribosomal subunit protein uL16 (Mycobacterium leprae (strain Br4923)).